Reading from the N-terminus, the 994-residue chain is Leucine-rich repeat receptor-like kinase protein FLORAL ORGAN NUMBER1 (994 aa).

The signal sequence occupies residues 1–17 (MPPTLLLLLLLLPPSLA). 21 LRR repeats span residues 73–93 (AINL…IALL), 94–117 (DSLA…LPTL), 118–141 (PSLR…DSGG), 147–171 (FPSL…SASH), 172–194 (ARLR…SYGD), 195–219 (LAAL…LSRL), 244–268 (LGAL…LGRL), 269–292 (QRLD…LGDL), 293–316 (SSLA…LANL), 318–340 (NLKL…VAGF), 341–364 (AQLE…LGKN), 365–388 (GRLK…LCAG), 390–412 (RLEM…LGDC), 413–436 (KTLT…LFNL), 438–459 (QANM…VIGG), 460–483 (DKIG…IGNL), 484–507 (PALQ…IGNL), 509–531 (NLSR…LIRC), 533–555 (SLAA…ITSL), 556–579 (KILC…MSNM), and 581–604 (SLTT…QFLV). Residues Asn-75, Asn-98, Asn-124, Asn-129, and Asn-159 are each glycosylated (N-linked (GlcNAc...) asparagine). Asn-256 is a glycosylation site (N-linked (GlcNAc...) asparagine). The N-linked (GlcNAc...) asparagine glycan is linked to Asn-315. Asn-352 carries N-linked (GlcNAc...) asparagine glycosylation. Residues Asn-495, Asn-509, and Asn-514 are each glycosylated (N-linked (GlcNAc...) asparagine). N-linked (GlcNAc...) asparagine glycosylation is found at Asn-562 and Asn-578. N-linked (GlcNAc...) asparagine glycosylation is present at Asn-606. Residues 647 to 667 (KKMLVALVAAFAAVAVAFLGA) form a helical membrane-spanning segment. A Protein kinase domain is found at 704–978 (VKEDNIIGKG…TMREVVHMLS (275 aa)). ATP is bound by residues 710-718 (IGKGGAGIV) and Lys-731. Asp-828 acts as the Proton acceptor in catalysis.

Belongs to the protein kinase superfamily. Ser/Thr protein kinase family. In terms of tissue distribution, expressed in shoot apical meristem, and after transition to the reproductive phase, detected in the inflorescence and the floral meristems. Expressed uniformly throughout the meristems. Expressed also in floral organ primordia, such as the palea, lemma, lodicules, stamens, carpels and ovules.

It is found in the membrane. The catalysed reaction is L-seryl-[protein] + ATP = O-phospho-L-seryl-[protein] + ADP + H(+). The enzyme catalyses L-threonyl-[protein] + ATP = O-phospho-L-threonyl-[protein] + ADP + H(+). Its function is as follows. Receptor-like kinase protein that regulates the size of the floral meristem. In Oryza sativa subsp. japonica (Rice), this protein is Leucine-rich repeat receptor-like kinase protein FLORAL ORGAN NUMBER1 (FON1).